The chain runs to 277 residues: Insulin-induced gene 1 protein (277 aa).

At 1–84 (MPRLHDHFWS…PYPNTWHHRL (84 aa)) the chain is on the cytoplasmic side. A compositionally biased stretch (low complexity) spans 51–66 (HGAPDADPAPRGRSAA). The disordered stretch occupies residues 51 to 73 (HGAPDADPAPRGRSAAMSGPEPG). The chain crosses the membrane as a helical span at residues 85-107 (LQRSLVLFSVGVVLALVLNLLQI). The Lumenal portion of the chain corresponds to 108-126 (QRNVTLFPEEVIATIFSSA). Residues 127–144 (WWVPPCCGTAAAVVGLLY) form a helical membrane-spanning segment. Residues 145–159 (PCIDSHLGEPHKFKR) lie on the Cytoplasmic side of the membrane. Glycyl lysine isopeptide (Lys-Gly) (interchain with G-Cter in ubiquitin) cross-links involve residues Lys-156 and Lys-158. A helical membrane pass occupies residues 160-182 (EWASVMRCIAVFVGINHASAKLD). Over 183–185 (FAN) the chain is Lumenal. The chain crosses the membrane as a helical span at residues 186 to 204 (NVQLSLTLAALSLGLWWTF). Over 205–209 (DRSRS) the chain is Cytoplasmic. The residue at position 207 (Ser-207) is a Phosphoserine; by PCK1. Residues 210–231 (GLGLGITIAFLATLITQFLVYN) form a helical membrane-spanning segment. At 232–245 (GVYQYTSPDFLYIR) the chain is on the lumenal side. A helical transmembrane segment spans residues 246-263 (SWLPCIFFSGGVTVGNIG). At 264-277 (RQLAMGVPEKPHSD) the chain is on the cytoplasmic side. The short motif at 271–277 (PEKPHSD) is the KxHxx element.

Belongs to the INSIG family. Interacts with SCAP; interaction is direct and only takes place in the presence of sterols; it prevents interaction between SCAP and the coat protein complex II (COPII). Associates with the SCAP-SREBP complex (composed of SCAP and SREBF1/SREBP1 or SREBF2/SREBP2); association is mediated via its interaction with SCAP and only takes place in the presence of sterols. Interaction with SCAP is mutually exclusive with PAQR3. Interacts with HMGCR (via its SSD); the interaction, accelerated by sterols, leads to the recruitment of HMGCR to AMFR/gp78 for its ubiquitination by the sterol-mediated ERAD pathway. Interacts with AMFR/gp78 (via its membrane domain); the interaction recruits HMCR at the ER membrane for its ubiquitination and degradation by the sterol-mediated ERAD pathway. Interacts with SOAT2/ACAT2; leading to promote recruitment of AMFR/gp78 and subsequent ubiquitination of SOAT2/ACAT2. Interacts with RNF139. Interacts with RNF145. Phosphorylation at Ser-207 by PCK1 reduces binding to oxysterol, disrupting the interaction between INSIG1 and SCAP, thereby promoting nuclear translocation of SREBP proteins (SREBF1/SREBP1 or SREBF2/SREBP2) and subsequent transcription of downstream lipogenesis-related genes. In terms of processing, ubiquitinated by AMFR/gp78 in response to sterol deprivation, leading to its degradation: when the SCAP-SREBP complex becomes dissociated from INSIG1, INSIG1 is then ubiquitinated and degraded in proteasomes. Although ubiquitination is required for rapid INSIG1 degradation, it is not required for release of the SCAP-SREBP complex. Ubiquitinated by RNF139. Expressed in all tissues tested with highest expression in the liver.

The protein resides in the endoplasmic reticulum membrane. Oxysterol-binding protein that mediates feedback control of cholesterol synthesis by controlling both endoplasmic reticulum to Golgi transport of SCAP and degradation of HMGCR. Acts as a negative regulator of cholesterol biosynthesis by mediating the retention of the SCAP-SREBP complex in the endoplasmic reticulum, thereby blocking the processing of sterol regulatory element-binding proteins (SREBPs) SREBF1/SREBP1 and SREBF2/SREBP2. Binds oxysterol, including 25-hydroxycholesterol, regulating interaction with SCAP and retention of the SCAP-SREBP complex in the endoplasmic reticulum. In presence of oxysterol, interacts with SCAP, retaining the SCAP-SREBP complex in the endoplasmic reticulum, thereby preventing SCAP from escorting SREBF1/SREBP1 and SREBF2/SREBP2 to the Golgi. Sterol deprivation or phosphorylation by PCK1 reduce oxysterol-binding, disrupting the interaction between INSIG1 and SCAP, thereby promoting Golgi transport of the SCAP-SREBP complex, followed by processing and nuclear translocation of SREBF1/SREBP1 and SREBF2/SREBP2. Also regulates cholesterol synthesis by regulating degradation of HMGCR: initiates the sterol-mediated ubiquitin-mediated endoplasmic reticulum-associated degradation (ERAD) of HMGCR via recruitment of the reductase to the ubiquitin ligases AMFR/gp78 and/or RNF139. Also regulates degradation of SOAT2/ACAT2 when the lipid levels are low: initiates the ubiquitin-mediated degradation of SOAT2/ACAT2 via recruitment of the ubiquitin ligases AMFR/gp78. This Homo sapiens (Human) protein is Insulin-induced gene 1 protein.